Reading from the N-terminus, the 228-residue chain is Octanoyltransferase (228 aa).

In terms of domain architecture, BPL/LPL catalytic spans 40 to 225 (GEEAERVWLV…SFERVFDAAP (186 aa)). Substrate contacts are provided by residues 79 to 86 (RGGQWTYH), 156 to 158 (AIG), and 169 to 171 (GIA). The active-site Acyl-thioester intermediate is the C187.

Belongs to the LipB family.

The protein resides in the cytoplasm. The enzyme catalyses octanoyl-[ACP] + L-lysyl-[protein] = N(6)-octanoyl-L-lysyl-[protein] + holo-[ACP] + H(+). It functions in the pathway protein modification; protein lipoylation via endogenous pathway; protein N(6)-(lipoyl)lysine from octanoyl-[acyl-carrier-protein]: step 1/2. Catalyzes the transfer of endogenously produced octanoic acid from octanoyl-acyl-carrier-protein onto the lipoyl domains of lipoate-dependent enzymes. Lipoyl-ACP can also act as a substrate although octanoyl-ACP is likely to be the physiological substrate. The chain is Octanoyltransferase from Acidiphilium cryptum (strain JF-5).